The sequence spans 207 residues: Ribosomal RNA large subunit methyltransferase E (207 aa).

5 residues coordinate S-adenosyl-L-methionine: G60, W62, D80, D96, and D121. K161 acts as the Proton acceptor in catalysis.

It belongs to the class I-like SAM-binding methyltransferase superfamily. RNA methyltransferase RlmE family.

It localises to the cytoplasm. It carries out the reaction uridine(2552) in 23S rRNA + S-adenosyl-L-methionine = 2'-O-methyluridine(2552) in 23S rRNA + S-adenosyl-L-homocysteine + H(+). Functionally, specifically methylates the uridine in position 2552 of 23S rRNA at the 2'-O position of the ribose in the fully assembled 50S ribosomal subunit. In Ectopseudomonas mendocina (strain ymp) (Pseudomonas mendocina), this protein is Ribosomal RNA large subunit methyltransferase E.